Consider the following 913-residue polypeptide: Cadherin-4 (913 aa).

The first 19 residues, 1–19 (MRTGSRLLLVLLVWGSAAA), serve as a signal peptide directing secretion. The propeptide occupies 20-166 (LNGDLTVRPT…SAKGLRRQKR (147 aa)). 5 Cadherin domains span residues 167–274 (DWVI…RPEF), 275–389 (INQV…PPEF), 390–504 (TTST…APYF), 505–610 (PTNH…DNAP), and 611–721 (ELLP…TIGA). Residues 167–731 (DWVIPPINVP…VAAAGLGTGA (565 aa)) are Extracellular-facing. Residues asparagine 280, asparagine 409, asparagine 554, asparagine 629, asparagine 658, and asparagine 699 are each glycosylated (N-linked (GlcNAc...) asparagine). A helical transmembrane segment spans residues 732–753 (IIAILICIIILLTMVLLFVVWM). Over 754–913 (KRREKERHTK…ADMYGGGEED (160 aa)) the chain is Cytoplasmic.

As to expression, embryonic brain and neuronal retina.

The protein resides in the cell membrane. Its function is as follows. Cadherins are calcium-dependent cell adhesion proteins. They preferentially interact with themselves in a homophilic manner in connecting cells; cadherins may thus contribute to the sorting of heterogeneous cell types. May play an important role in retinal development. The protein is Cadherin-4 (CDH4) of Gallus gallus (Chicken).